The sequence spans 249 residues: 3-deoxy-D-manno-octulosonic acid kinase (249 aa).

D175 is a catalytic residue.

Belongs to the protein kinase superfamily. KdkA/RfaP family.

It localises to the cell inner membrane. It catalyses the reaction an alpha-Kdo-(2-&gt;6)-lipid IVA + ATP = a 4-O-phospho-alpha-Kdo-(2-&gt;6)-lipid IVA + ADP + H(+). It participates in bacterial outer membrane biogenesis; LPS core biosynthesis. In terms of biological role, catalyzes the ATP-dependent phosphorylation of the 3-deoxy-D-manno-octulosonic acid (Kdo) residue in Kdo-lipid IV(A) at the 4-OH position. The sequence is that of 3-deoxy-D-manno-octulosonic acid kinase from Xanthomonas campestris pv. campestris (strain 8004).